A 263-amino-acid polypeptide reads, in one-letter code: Indolethylamine N-methyltransferase (263 aa).

An N6-succinyllysine modification is found at K13. S-adenosyl-L-methionine is bound by residues Y20, Y25, G63, Y69, 85 to 87 (DFT), and N90. Residue K96 is modified to N6-succinyllysine. S-adenosyl-L-methionine-binding positions include 142–143 (DV) and L163.

This sequence belongs to the class I-like SAM-binding methyltransferase superfamily. NNMT/PNMT/TEMT family. Monomer. Widely expressed. The highest levels were in thyroid, adrenal gland, adult and fetal lung. Intermediate levels in heart, placenta, skeletal muscle, testis, small intestine, pancreas, stomach, spinal cord, lymph node and trachea. Very low levels in adult and fetal kidney and liver, in adult spleen, thymus, ovary, colon and bone marrow. Not expressed in peripheral blood leukocytes and brain.

The protein resides in the cytoplasm. The catalysed reaction is a tertiary amine + S-adenosyl-L-methionine = a methylated tertiary amine + S-adenosyl-L-homocysteine + H(+). It carries out the reaction a secondary amine + S-adenosyl-L-methionine = a methylated secondary amine + S-adenosyl-L-homocysteine + H(+). It catalyses the reaction a primary amine + S-adenosyl-L-methionine = a methylated primary amine + S-adenosyl-L-homocysteine + H(+). The enzyme catalyses dimethyl sulfide + S-adenosyl-L-methionine = trimethylsulfonium + S-adenosyl-L-homocysteine. In terms of biological role, functions as a thioether S-methyltransferase and is active with a variety of thioethers and the corresponding selenium and tellurium compounds, including 3-methylthiopropionaldehyde, dimethyl selenide, dimethyl telluride, 2-methylthioethylamine, 2-methylthioethanol, methyl-n-propyl sulfide and diethyl sulfide. Plays an important role in the detoxification of selenium compounds. Catalyzes the N-methylation of tryptamine and structurally related compounds. The sequence is that of Indolethylamine N-methyltransferase (INMT) from Homo sapiens (Human).